Here is a 703-residue protein sequence, read N- to C-terminus: MTPITKSFQYGQHTVTLETGVIARQATAAVMASMDDTSVLVSVVGKKDTKPGQDFFPLTVNYQERTYAAGKIPGGFFKREGRPSEYETLTSRLIDRPIRPLFPDGFMNEVQIIVTVVSANPEIPTDIISLIGTSAALAISGMPFNGPVGAARVGYTDGQYVLNTRTSELEISQLDLVVAGTKGAVLMVESEAEVLSEDVMLGAVMFGHEQMQTVVNAVTEFAAEVNTPKWDWVAEPANVTLKDKIKALAEAEMTEAYQISDKMARKDAIVALTDKTVAAIVEADAEQDAKEVSELLHELESDVVRSRILAGQPRIDGRDPAMIRALDVATGILPRTHGSALFTRGETQAIVAATLGTERDAQMIDGLNGKVDSRFMLHYNFPPYCVGETGFVGSPKRREIGHGRLAKRGIQAVMPSEKEFPYVVRVVSEITESNGSSSMASVCGTSLALMDAGVPIKASVAGIAMGLVKNDENFVVLSDILGDEDHLGDMDFKVAGTTEGITALQMDIKIEGITQEIMQVALKQAKEARLHILGVMDQAISGHRDEMSEFAPRIYTLKIDQDKIRDVIGKGGAMIRSITEASDTNIEIEDDGTIKIFATERAKADIAISKIEQVTADVEAGKTYEGKVTRIVDFGAFVEILPGKEGLVHISQIAHERVNKVADHLSEGQIINVKVMEIDRQNRVRLSIKELLEKPAAPAEGNE.

Mg(2+)-binding residues include D485 and D491. The KH domain maps to 552–611 (PRIYTLKIDQDKIRDVIGKGGAMIRSITEASDTNIEIEDDGTIKIFATERAKADIAISKI). One can recognise an S1 motif domain in the interval 621–689 (GKTYEGKVTR…RQNRVRLSIK (69 aa)).

The protein belongs to the polyribonucleotide nucleotidyltransferase family. As to quaternary structure, component of the RNA degradosome, which is a multiprotein complex involved in RNA processing and mRNA degradation. The cofactor is Mg(2+).

The protein resides in the cytoplasm. It catalyses the reaction RNA(n+1) + phosphate = RNA(n) + a ribonucleoside 5'-diphosphate. Its function is as follows. Involved in mRNA degradation. Catalyzes the phosphorolysis of single-stranded polyribonucleotides processively in the 3'- to 5'-direction. The chain is Polyribonucleotide nucleotidyltransferase from Pseudoalteromonas atlantica (strain T6c / ATCC BAA-1087).